The chain runs to 476 residues: RuvB-like helicase 2 (476 aa).

72-80 (VGPPSTGKT) is a binding site for ATP.

It belongs to the RuvB family. In terms of assembly, may form heterododecamers with RVB1. Component of the SWR1 chromatin remodeling complex, the INO80 chromatin remodeling complex, and of the R2TP complex.

Its subcellular location is the nucleus. It carries out the reaction ATP + H2O = ADP + phosphate + H(+). DNA helicase which participates in several chromatin remodeling complexes, including the SWR1 and the INO80 complexes. The SWR1 complex mediates the ATP-dependent exchange of histone H2A for the H2A variant HZT1 leading to transcriptional regulation of selected genes by chromatin remodeling. The INO80 complex remodels chromatin by shifting nucleosomes and is involved in DNA repair. Also involved in pre-rRNA processing. This chain is RuvB-like helicase 2 (RVB2), found in Mycosarcoma maydis (Corn smut fungus).